Here is a 116-residue protein sequence, read N- to C-terminus: Signal recognition particle 14 kDa protein (116 aa).

This sequence belongs to the SRP14 family. As to quaternary structure, heterodimer with ZK512.4/SRP9; binds RNA as heterodimer. Component of a signal recognition particle (SRP) complex that consists of a 7SL RNA molecule of 300 nucleotides and six protein subunits: srpa-72, srpa-68, SRP54, F37F2.2/SRP19, F25G6.8/SRP14 and ZK512.4/SRP9.

It is found in the cytoplasm. Functionally, component of the signal recognition particle (SRP) complex, a ribonucleoprotein complex that mediates the cotranslational targeting of secretory and membrane proteins to the endoplasmic reticulum (ER). F37F2.2/srpa-19 together with F25G6.8/srpa-14 and the Alu portion of the SRP RNA, constitutes the elongation arrest domain of SRP. The complex of F37F2.2/srpa-19 and F25G6.8/srpa-14 is required for SRP RNA binding. The chain is Signal recognition particle 14 kDa protein from Caenorhabditis elegans.